Here is a 475-residue protein sequence, read N- to C-terminus: Glycogen synthase (475 aa).

K15 lines the ADP-alpha-D-glucose pocket.

This sequence belongs to the glycosyltransferase 1 family. Bacterial/plant glycogen synthase subfamily.

It carries out the reaction [(1-&gt;4)-alpha-D-glucosyl](n) + ADP-alpha-D-glucose = [(1-&gt;4)-alpha-D-glucosyl](n+1) + ADP + H(+). Its pathway is glycan biosynthesis; glycogen biosynthesis. Its function is as follows. Synthesizes alpha-1,4-glucan chains using ADP-glucose. The polypeptide is Glycogen synthase (Chlamydia caviae (strain ATCC VR-813 / DSM 19441 / 03DC25 / GPIC) (Chlamydophila caviae)).